The following is a 396-amino-acid chain: Probable tRNA sulfurtransferase (396 aa).

One can recognise a THUMP domain in the interval Ala-63–Ile-166. Residues Leu-184–Tyr-185, Arg-266, Gly-288, and Gln-297 contribute to the ATP site.

This sequence belongs to the ThiI family.

The protein localises to the cytoplasm. It carries out the reaction [ThiI sulfur-carrier protein]-S-sulfanyl-L-cysteine + a uridine in tRNA + 2 reduced [2Fe-2S]-[ferredoxin] + ATP + H(+) = [ThiI sulfur-carrier protein]-L-cysteine + a 4-thiouridine in tRNA + 2 oxidized [2Fe-2S]-[ferredoxin] + AMP + diphosphate. The catalysed reaction is [ThiS sulfur-carrier protein]-C-terminal Gly-Gly-AMP + S-sulfanyl-L-cysteinyl-[cysteine desulfurase] + AH2 = [ThiS sulfur-carrier protein]-C-terminal-Gly-aminoethanethioate + L-cysteinyl-[cysteine desulfurase] + A + AMP + 2 H(+). It functions in the pathway cofactor biosynthesis; thiamine diphosphate biosynthesis. Its function is as follows. Catalyzes the ATP-dependent transfer of a sulfur to tRNA to produce 4-thiouridine in position 8 of tRNAs, which functions as a near-UV photosensor. Also catalyzes the transfer of sulfur to the sulfur carrier protein ThiS, forming ThiS-thiocarboxylate. This is a step in the synthesis of thiazole, in the thiamine biosynthesis pathway. The sulfur is donated as persulfide by IscS. This Aeropyrum pernix (strain ATCC 700893 / DSM 11879 / JCM 9820 / NBRC 100138 / K1) protein is Probable tRNA sulfurtransferase.